The chain runs to 292 residues: Aspartate carbamoyltransferase catalytic subunit (292 aa).

Residues arginine 50 and threonine 51 each contribute to the carbamoyl phosphate site. Residue lysine 78 participates in L-aspartate binding. Residues arginine 100, histidine 128, and glutamine 131 each coordinate carbamoyl phosphate. 2 residues coordinate L-aspartate: arginine 161 and arginine 211. Residues glycine 250 and proline 251 each contribute to the carbamoyl phosphate site.

This sequence belongs to the aspartate/ornithine carbamoyltransferase superfamily. ATCase family. Heterododecamer (2C3:3R2) of six catalytic PyrB chains organized as two trimers (C3), and six regulatory PyrI chains organized as three dimers (R2).

The enzyme catalyses carbamoyl phosphate + L-aspartate = N-carbamoyl-L-aspartate + phosphate + H(+). It functions in the pathway pyrimidine metabolism; UMP biosynthesis via de novo pathway; (S)-dihydroorotate from bicarbonate: step 2/3. Catalyzes the condensation of carbamoyl phosphate and aspartate to form carbamoyl aspartate and inorganic phosphate, the committed step in the de novo pyrimidine nucleotide biosynthesis pathway. The chain is Aspartate carbamoyltransferase catalytic subunit from Nitratiruptor sp. (strain SB155-2).